A 326-amino-acid polypeptide reads, in one-letter code: MGKIIQLQEEERLRQGKNLLGFSGGVDSTALFFLLLEREIPFDIALVNYHQRAQAKEEESYAKELAHRHQKRCFTLSCPLGPSNFEHQARLERYRFFESLIHQEGYARLLLAHHLGDRLEWLLMRLAQGSSLSTLLGFSSREIRLGYELIRPLGEITKEALYDYLHQHQIRYFEDESNRDPKPLRNRFRPLSETLLKEHAQGLLQSFRFLQEEREILYGEDPRIRRDSLFYFPSQERETQNLHLIDLSLKALGYVMSQGERQELLKSGFCVVLKGKVAIGRSERGIFIAPFERVIIPKAQRERLRIAKIPPKVRPYCFMAGIDSLL.

23-28 (SGGVDS) is an ATP binding site.

The protein belongs to the tRNA(Ile)-lysidine synthase family.

Its subcellular location is the cytoplasm. It catalyses the reaction cytidine(34) in tRNA(Ile2) + L-lysine + ATP = lysidine(34) in tRNA(Ile2) + AMP + diphosphate + H(+). Its function is as follows. Ligates lysine onto the cytidine present at position 34 of the AUA codon-specific tRNA(Ile) that contains the anticodon CAU, in an ATP-dependent manner. Cytidine is converted to lysidine, thus changing the amino acid specificity of the tRNA from methionine to isoleucine. This Wolinella succinogenes (strain ATCC 29543 / DSM 1740 / CCUG 13145 / JCM 31913 / LMG 7466 / NCTC 11488 / FDC 602W) (Vibrio succinogenes) protein is tRNA(Ile)-lysidine synthase.